The following is a 609-amino-acid chain: Oxidoreductase tpcJ (609 aa).

The N-terminal stretch at Met-1–Ala-16 is a signal peptide. N-linked (GlcNAc...) asparagine glycans are attached at residues Asn-63, Asn-107, Asn-113, Asn-240, Asn-283, Asn-471, and Asn-601. 3 Plastocyanin-like domains span residues Val-66–Ser-186, Pro-196–Glu-351, and Val-429–Lys-567.

The protein belongs to the multicopper oxidase family. As to expression, specifically expressed in conidia.

Its pathway is secondary metabolite biosynthesis. Oxidoreductase; part of the gene cluster that mediates the biosynthesis of trypacidin, a mycotoxin with antiprotozoal activity and that plays a role in the infection process. The pathway begins with the synthesis of atrochrysone thioester by the polyketide synthase (PKS) tpcC. The atrochrysone carboxyl ACP thioesterase tpcB then breaks the thioester bond and releases the atrochrysone carboxylic acid from tpcC. The decarboxylase tpcK converts atrochrysone carboxylic acid to atrochrysone which is further reduced into emodin anthrone. The next step is performed by the emodin anthrone oxygenase tpcL that catalyzes the oxidation of emodinanthrone to emodin. Emodin O-methyltransferase encoded by tpcA catalyzes methylation of the 8-hydroxy group of emodin to form questin. Ring cleavage of questin by questin oxidase tpcI leads to desmethylsulochrin via several intermediates including questin epoxide. Another methylation step catalyzed by tpcM leads to the formation of sulochrin which is further converted to monomethylsulfochrin by tpcH. Finally, the tpcJ catalyzes the conversion of monomethylsulfochrin to trypacidin. Trypacidin is toxic for human pulmonary and bronchial epithelial cells by initiating the intracellular formation of nitric oxide (NO) and hydrogen peroxide (H(2)O(2)), thus triggering host necrotic cell death. The trypacidin pathway is also able to produce endocrocin via a distinct route from the endocrocin Enc pathway. The sequence is that of Oxidoreductase tpcJ from Aspergillus fumigatus (strain ATCC MYA-4609 / CBS 101355 / FGSC A1100 / Af293) (Neosartorya fumigata).